The sequence spans 235 residues: REF/SRPP-like protein At2g47780 (235 aa).

Positions methionine 1–glutamine 12 are enriched in acidic residues. The disordered stretch occupies residues methionine 1 to valine 32.

The protein belongs to the REF/SRPP family.

The polypeptide is REF/SRPP-like protein At2g47780 (Arabidopsis thaliana (Mouse-ear cress)).